We begin with the raw amino-acid sequence, 495 residues long: Ribosome biogenesis protein YTM1 (495 aa).

A ubiquitin-like (UBL) domain region spans residues 15 to 97 (VKVIFTTTEP…ETTLTLQYVR (83 aa)). 7 WD repeats span residues 129-168 (WSSAANSSAAVQPGQERVLSASYDGLLRIWNASGSVIATS), 175-213 (GHTASIKAAKFLTSDRLASAGMDRTVRVWKYTESDHFTG), 223-262 (GHTGSVDWLDVDGHSKHILTASADGAIGFWSASKASAPEP), 264-295 (ASLLPGAHVSKRRKATSSVSTAQRGPLGLWSI), 296-337 (HTAP…STLT), 386-426 (GHAN…PATK), and 458-495 (GDGCKVFSVVWDKLGIFSGGEDKKVQVNRGRNIVTEQK).

This sequence belongs to the WD repeat WDR12/YTM1 family. As to quaternary structure, component of the NOP7 complex, composed of ERB1, NOP7 and YTM1. The complex is held together by ERB1, which interacts with NOP7 via its N-terminal domain and with YTM1 via a high-affinity interaction between the seven-bladed beta-propeller domains of the 2 proteins. The NOP7 complex associates with the 66S pre-ribosome. Interacts (via UBL domain) with MDN1 (via VWFA/MIDAS domain).

Its subcellular location is the nucleus. It is found in the nucleolus. It localises to the nucleoplasm. In terms of biological role, component of the NOP7 complex, which is required for maturation of the 25S and 5.8S ribosomal RNAs and formation of the 60S ribosome. The chain is Ribosome biogenesis protein YTM1 from Chaetomium thermophilum (strain DSM 1495 / CBS 144.50 / IMI 039719) (Thermochaetoides thermophila).